The chain runs to 86 residues: Small ribosomal subunit protein bS18 (86 aa).

Residues 1–20 (MSREEGNNGRRPGGKMRRSR) are disordered.

The protein belongs to the bacterial ribosomal protein bS18 family. As to quaternary structure, part of the 30S ribosomal subunit. Forms a tight heterodimer with protein bS6.

Binds as a heterodimer with protein bS6 to the central domain of the 16S rRNA, where it helps stabilize the platform of the 30S subunit. The sequence is that of Small ribosomal subunit protein bS18 from Clostridium beijerinckii (strain ATCC 51743 / NCIMB 8052) (Clostridium acetobutylicum).